Consider the following 268-residue polypeptide: Shikimate dehydrogenase (NADP(+)) (268 aa).

Shikimate contacts are provided by residues Ser14–Ser16 and Thr61. Lys65 acts as the Proton acceptor in catalysis. Residues Asn86 and Asp102 each contribute to the shikimate site. Residues Gly126–Ala130, Asn149–Lys154, and Met213 each bind NADP(+). Residue Tyr215 participates in shikimate binding. Gly238 contributes to the NADP(+) binding site.

The protein belongs to the shikimate dehydrogenase family. Homodimer.

It catalyses the reaction shikimate + NADP(+) = 3-dehydroshikimate + NADPH + H(+). Its pathway is metabolic intermediate biosynthesis; chorismate biosynthesis; chorismate from D-erythrose 4-phosphate and phosphoenolpyruvate: step 4/7. Functionally, involved in the biosynthesis of the chorismate, which leads to the biosynthesis of aromatic amino acids. Catalyzes the reversible NADPH linked reduction of 3-dehydroshikimate (DHSA) to yield shikimate (SA). This Haemophilus influenzae (strain PittGG) protein is Shikimate dehydrogenase (NADP(+)).